We begin with the raw amino-acid sequence, 1859 residues long: Retinitis pigmentosa 1-like 1 protein (1859 aa).

Disordered stretches follow at residues 1–22 (MNST…PSHR) and 115–154 (RKPP…YSWK). Residues 42–126 (KKITFLKRGD…PPKTSREPGR (85 aa)) form the Doublecortin 1 domain. Residues 115–126 (RKPPKTSREPGR) are compositionally biased toward basic and acidic residues. Residues 130-139 (KSPSAGQAQV) are compositionally biased toward polar residues. The 80-residue stretch at 160 to 239 (RRLTLVKNGD…NEAFRCLEME (80 aa)) folds into the Doublecortin 2 domain. Disordered regions lie at residues 263-301 (PNAK…SGHR), 426-445 (IWRN…RRRW), 457-593 (WRQE…TQSH), 700-750 (MPQE…TSKA), 868-920 (CFGR…TPSA), 952-997 (NTEV…GVLS), 1152-1211 (TEDF…YPEL), 1227-1255 (ATGG…STML), 1298-1350 (GSQD…RVRE), and 1567-1859 (LQSK…DLDF). The span at 457–472 (WRQEANHRKGHDKDNL) shows a compositional bias: basic and acidic residues. 2 stretches are compositionally biased toward polar residues: residues 499–512 (GSDT…ASSH) and 535–551 (PETQ…SVSA). Residues 716–728 (SPSNSPSAGNQAS) are compositionally biased toward low complexity. Positions 734–750 (PFSSSLDLQEPQATSKA) are enriched in polar residues. The span at 870 to 883 (GRESASNGSTSSGH) shows a compositional bias: low complexity. Composition is skewed to polar residues over residues 1241–1252 (TWGNAPEQSVHS), 1336–1345 (ESPQHFSESN), and 1567–1577 (LQSKKGGSSNR). Residues 1616 to 1632 (GEGKQRLRAEEDPEILK) show a composition bias toward basic and acidic residues. Residues 1641 to 1652 (PEEDEATEEDGE) show a composition bias toward acidic residues. The segment covering 1700–1720 (EASRERQQEVEGRHQDVKEDS) has biased composition (basic and acidic residues). The span at 1756–1778 (SHHTACSSRALSLDNSSQVSQKG) shows a compositional bias: polar residues.

As to quaternary structure, interacts with RP1; has a synergistic effect with RP1 in photoreceptor differentiation. Retinal-specific; expressed in photoreceptor.

Its subcellular location is the cytoplasm. The protein localises to the cytoskeleton. It is found in the cilium axoneme. The protein resides in the cell projection. It localises to the cilium. Its subcellular location is the photoreceptor outer segment. Functionally, required for the differentiation of photoreceptor cells. Plays a role in the organization of outer segment of rod and cone photoreceptors. The polypeptide is Retinitis pigmentosa 1-like 1 protein (Rp1l1) (Mus musculus (Mouse)).